Consider the following 752-residue polypeptide: Palmitoyltransferase AKR1 (752 aa).

Disordered stretches follow at residues 1 to 21 (MTAE…KSDY) and 49 to 68 (ASSE…LGSV). Over 1-318 (MTAEEVDKES…FPLPQYFSAS (318 aa)) the chain is Cytoplasmic. 2 stretches are compositionally biased toward basic and acidic residues: residues 9-21 (ESDP…KSDY) and 51-68 (SELK…LGSV). ANK repeat units follow at residues 72–102 (PILE…DLSN), 108–137 (ERVS…EVNF), 142–171 (LDAT…DPNI), 175–208 (QGYN…DVDQ), 212–241 (HQRT…DVKN), and 245–274 (AGFT…DFFQ). Residues 319 to 339 (TGKMLTFFLPWVLIPLVFYIF) traverse the membrane as a helical segment. Residues 340 to 341 (SK) lie on the Lumenal side of the membrane. The helical transmembrane segment at 342-362 (ITFFIALLINTIVLVISGLVL) threads the bilayer. The Cytoplasmic portion of the chain corresponds to 363–380 (SRLVVPSYLLSKRHPILN). Residues 381 to 401 (SPLLAGILSGTIAIAFFIWFT) traverse the membrane as a helical segment. Residues 402–412 (KISILTFTEKP) lie on the Lumenal side of the membrane. A helical membrane pass occupies residues 413–433 (VGNIIMLGFFIGLITLFIGLM). Residues 434-509 (KSDPGYIPGT…YNQIGLLNHK (76 aa)) are Cytoplasmic-facing. Positions 466–516 (HFCVHTWIRIPLRSKYDRDSACLISAFDHFCPWVYNQIGLLNHKLFYMFVV) constitute a DHHC domain. The S-palmitoyl cysteine intermediate role is filled by cysteine 496. A helical transmembrane segment spans residues 510–530 (LFYMFVVLLEISVWWFLPLMM). Residues 531 to 567 (EYFDELEDYLENRKGKHFGDCHFLGDEDLCFGLHHDT) lie on the Lumenal side of the membrane. Residues 568–588 (FNFLLLCWVIFQAFWVLCLIA) form a helical membrane-spanning segment. The Cytoplasmic segment spans residues 589 to 752 (VQTVQMLKGV…TLPNATEELV (164 aa)).

This sequence belongs to the DHHC palmitoyltransferase family. AKR/ZDHHC17 subfamily.

It localises to the early endosome membrane. It is found in the golgi apparatus membrane. It catalyses the reaction L-cysteinyl-[protein] + hexadecanoyl-CoA = S-hexadecanoyl-L-cysteinyl-[protein] + CoA. In terms of biological role, palmitoyltransferase specific for casein kinase 1. The protein is Palmitoyltransferase AKR1 (AKR1) of Kluyveromyces lactis (strain ATCC 8585 / CBS 2359 / DSM 70799 / NBRC 1267 / NRRL Y-1140 / WM37) (Yeast).